Reading from the N-terminus, the 289-residue chain is Diaminopimelate epimerase (289 aa).

Substrate-binding residues include asparagine 11 and asparagine 78. Residue cysteine 87 is the Proton donor of the active site. Substrate-binding positions include glycine 88 to asparagine 89, asparagine 163, asparagine 199, and glutamate 217 to arginine 218. The active-site Proton acceptor is cysteine 226. Glycine 227–threonine 228 is a binding site for substrate.

Belongs to the diaminopimelate epimerase family. As to quaternary structure, homodimer.

The protein localises to the cytoplasm. The enzyme catalyses (2S,6S)-2,6-diaminopimelate = meso-2,6-diaminopimelate. The protein operates within amino-acid biosynthesis; L-lysine biosynthesis via DAP pathway; DL-2,6-diaminopimelate from LL-2,6-diaminopimelate: step 1/1. Functionally, catalyzes the stereoinversion of LL-2,6-diaminopimelate (L,L-DAP) to meso-diaminopimelate (meso-DAP), a precursor of L-lysine and an essential component of the bacterial peptidoglycan. The sequence is that of Diaminopimelate epimerase from Rhodococcus jostii (strain RHA1).